The chain runs to 370 residues: A-type ATP synthase subunit C (370 aa).

This sequence belongs to the V-ATPase V0D/AC39 subunit family. As to quaternary structure, has multiple subunits with at least A(3), B(3), C, D, E, F, H, I and proteolipid K(x).

The protein resides in the cell membrane. Component of the A-type ATP synthase that produces ATP from ADP in the presence of a proton gradient across the membrane. This Pyrococcus furiosus (strain ATCC 43587 / DSM 3638 / JCM 8422 / Vc1) protein is A-type ATP synthase subunit C.